A 697-amino-acid polypeptide reads, in one-letter code: MARKTPIERYRNIGISAHIDAGKTTTSERILFYTGVTHKLGEVHDGAATTDWMEQEQERGITITSSAVTCFWKGMDLSRPEHRINIIDTPGHVDFTIEVERSMRVLDGACMVYCAVGGVQPQSETVWRQANKHKVPRLAFVNKMDRTGANFFKVVEQMKLRLQANPVPVVIPIGAEDNFAGVVDLIKMKAIYWDDASQGMKFEYKDIPADLLDTANEWREKMVESAAEASEELMNKYLESGELSEAEIIAGLRQRTIATEIQPMLCGSAFKNKGVQRMLDAVLDFLPSPVDIPDVVGESESGEPLTRKADDNEHFSALAFKLMSDPFVGQLTFVRVYSGVLTKGETVYNSTSGRKERIGRIVQMSANERNEIEEIRAGDIAACIGLKEVTTGETLCSIDHPIILERMVFPEPVISVAIEPKTKSDQEKMGLALSRLAQEDPSFRVRTDEETNQTIISGMGELHLEIIVDRMKREFNVEANVGAPQVAYREAIKKPVEVEGKFVKQSGGKGQYGHVWIKMEPNEPGKGYEFIDQIKGGTVPREFIPAVDKGLRETIPSGVLAGFPVVDVKVTLFDGSYHDVDSNENAFKMAASMAFKDGMRKADPVLLEPIMAVEVETPEDYMGDVMGDLSSRRGVIQGMDDLVGGGKAIRAEVPLSEMFGYATTVRSLTQGRATYSMEFKHYAEAPRNVAEAIINKK.

A tr-type G domain is found at 8-290 (ERYRNIGISA…AVLDFLPSPV (283 aa)). Residues 17–24 (AHIDAGKT), 88–92 (DTPGH), and 142–145 (NKMD) contribute to the GTP site.

It belongs to the TRAFAC class translation factor GTPase superfamily. Classic translation factor GTPase family. EF-G/EF-2 subfamily.

The protein resides in the cytoplasm. Catalyzes the GTP-dependent ribosomal translocation step during translation elongation. During this step, the ribosome changes from the pre-translocational (PRE) to the post-translocational (POST) state as the newly formed A-site-bound peptidyl-tRNA and P-site-bound deacylated tRNA move to the P and E sites, respectively. Catalyzes the coordinated movement of the two tRNA molecules, the mRNA and conformational changes in the ribosome. The protein is Elongation factor G of Methylobacillus flagellatus (strain ATCC 51484 / DSM 6875 / VKM B-1610 / KT).